A 119-amino-acid polypeptide reads, in one-letter code: Immunoglobulin heavy variable 2-70 (119 aa).

A signal peptide spans 1–19 (MDILCSTLLLLTVPSWVLS). The residue at position 20 (Q20) is a Pyrrolidone carboxylic acid. A framework-1 region spans residues 20-44 (QVTLRESGPALVKPTQTLTLTCTFS). An Ig-like domain is found at 20–119 (QVTLRESGPA…DTATYYCARI (100 aa)). Residues C41 and C116 are joined by a disulfide bond. The tract at residues 45–54 (GFSLSTSGMC) is complementarity-determining-1. The interval 55–71 (VSWIRQPPGKALEWLAL) is framework-2. Positions 72–78 (IDWDDDK) are complementarity-determining-2. The interval 79-116 (YYSTSLKTRLTISKDTSKNQVVLTMTNMDPVDTATYYC) is framework-3. The tract at residues 117–119 (ARI) is complementarity-determining-3.

In terms of assembly, immunoglobulins are composed of two identical heavy chains and two identical light chains; disulfide-linked.

The protein localises to the secreted. Its subcellular location is the cell membrane. In terms of biological role, v region of the variable domain of immunoglobulin heavy chains that participates in the antigen recognition. Immunoglobulins, also known as antibodies, are membrane-bound or secreted glycoproteins produced by B lymphocytes. In the recognition phase of humoral immunity, the membrane-bound immunoglobulins serve as receptors which, upon binding of a specific antigen, trigger the clonal expansion and differentiation of B lymphocytes into immunoglobulins-secreting plasma cells. Secreted immunoglobulins mediate the effector phase of humoral immunity, which results in the elimination of bound antigens. The antigen binding site is formed by the variable domain of one heavy chain, together with that of its associated light chain. Thus, each immunoglobulin has two antigen binding sites with remarkable affinity for a particular antigen. The variable domains are assembled by a process called V-(D)-J rearrangement and can then be subjected to somatic hypermutations which, after exposure to antigen and selection, allow affinity maturation for a particular antigen. The chain is Immunoglobulin heavy variable 2-70 from Homo sapiens (Human).